We begin with the raw amino-acid sequence, 1451 residues long: DNA excision repair protein ERCC-6-like (1451 aa).

The TPR 1 repeat unit spans residues 27–60; sequence YDRYRQKGKEAALNGELPRALELFQLAYQLQPSE. The 169-residue stretch at 118 to 286 folds into the Helicase ATP-binding domain; the sequence is SLYRDGRKGG…WALFDFACQG (169 aa). 131-138 lines the ATP pocket; the sequence is DDMGLGKT. The DEAH box motif lies at 237 to 240; the sequence is DEAH. A Helicase C-terminal domain is found at 479 to 639; it reads FVVSLMECLR…PFRYFSKQEL (161 aa). Disordered stretches follow at residues 647–669, 778–804, 935–1006, 1035–1054, 1063–1083, 1096–1140, and 1182–1343; these read DTRS…RSDT, NSFD…ETAS, DDTS…ATTD, DEEV…EFQL, LEEP…NYND, RSTP…LTSS, and LLEN…SAEL. Residues 781–804 show a composition bias toward acidic residues; that stretch reads DEPEFEEDEQNLPSAEDAEMETAS. Composition is skewed to polar residues over residues 944–964 and 992–1002; these read SDFN…SPSL and QVLSSPLSQHE. Serine 961 carries the phosphoserine modification. A compositionally biased stretch (acidic residues) spans 1035 to 1050; that stretch reads DEEVHEVEESAAEESP. Positions 1063–1074 are enriched in basic and acidic residues; that stretch reads LEEPSINHDKQN. Over residues 1121–1132 the composition is skewed to acidic residues; that stretch reads DTEEEEEEEEES. Residues 1213–1230 show a composition bias toward polar residues; sequence VQTSSGDNSKSYETSEAN. The segment covering 1244 to 1278 has biased composition (basic and acidic residues); the sequence is YREGKNTSDKVSESNETHSEEFAEEEKPSGDKSES. Residues 1310–1341 show a composition bias toward acidic residues; sequence SEADESVVEEEEPSGETLNTEESEMGEEEESA. A TPR 2 repeat occupies 1402 to 1435; that stretch reads YNLLVLSGKQSLAEGRKQEALDFFLKAIDINTGD.

It belongs to the SNF2/RAD54 helicase family.

It localises to the chromosome. Its subcellular location is the centromere. The protein localises to the kinetochore. It catalyses the reaction ATP + H2O = ADP + phosphate + H(+). Functionally, DNA helicase that acts as a tension sensor that associates with catenated DNA which is stretched under tension until it is resolved during anaphase. Functions as ATP-dependent DNA translocase. Can promote Holliday junction branch migration (in vitro). This Danio rerio (Zebrafish) protein is DNA excision repair protein ERCC-6-like (ercc6l).